The primary structure comprises 428 residues: 3-phosphoshikimate 1-carboxyvinyltransferase (428 aa).

3-phosphoshikimate is bound by residues Lys22, Ser23, and Arg27. Lys22 provides a ligand contact to phosphoenolpyruvate. Positions 96 and 124 each coordinate phosphoenolpyruvate. The 3-phosphoshikimate site is built by Ser169, Ser170, Gln171, Ser197, Asp313, Asn336, and Lys340. A phosphoenolpyruvate-binding site is contributed by Gln171. The active-site Proton acceptor is Asp313. Phosphoenolpyruvate contacts are provided by Arg344, Arg386, and Lys411.

The protein belongs to the EPSP synthase family. Monomer.

The protein localises to the cytoplasm. It carries out the reaction 3-phosphoshikimate + phosphoenolpyruvate = 5-O-(1-carboxyvinyl)-3-phosphoshikimate + phosphate. Its pathway is metabolic intermediate biosynthesis; chorismate biosynthesis; chorismate from D-erythrose 4-phosphate and phosphoenolpyruvate: step 6/7. In terms of biological role, catalyzes the transfer of the enolpyruvyl moiety of phosphoenolpyruvate (PEP) to the 5-hydroxyl of shikimate-3-phosphate (S3P) to produce enolpyruvyl shikimate-3-phosphate and inorganic phosphate. This Photorhabdus laumondii subsp. laumondii (strain DSM 15139 / CIP 105565 / TT01) (Photorhabdus luminescens subsp. laumondii) protein is 3-phosphoshikimate 1-carboxyvinyltransferase.